The sequence spans 199 residues: Probable molybdenum cofactor guanylyltransferase (199 aa).

GTP contacts are provided by residues 6–8 (LAG), Lys18, Asp65, and Asp97. Asp97 contributes to the Mg(2+) binding site.

The protein belongs to the MobA family. Mg(2+) is required as a cofactor.

The protein resides in the cytoplasm. It carries out the reaction Mo-molybdopterin + GTP + H(+) = Mo-molybdopterin guanine dinucleotide + diphosphate. Transfers a GMP moiety from GTP to Mo-molybdopterin (Mo-MPT) cofactor (Moco or molybdenum cofactor) to form Mo-molybdopterin guanine dinucleotide (Mo-MGD) cofactor. In Staphylococcus aureus (strain COL), this protein is Probable molybdenum cofactor guanylyltransferase.